A 305-amino-acid polypeptide reads, in one-letter code: Probable lipid kinase YegS-like (305 aa).

The DAGKc domain occupies 1 to 129 (MTQRRAMLIL…VDLGEVGGKL (129 aa)). ATP is bound by residues threonine 39, 65-71 (GDGTLRD), and threonine 92. 3 residues coordinate Mg(2+): leucine 210, aspartate 213, and leucine 215. Glutamate 268 functions as the Proton acceptor in the catalytic mechanism.

Belongs to the diacylglycerol/lipid kinase family. YegS lipid kinase subfamily. The cofactor is Mg(2+). It depends on Ca(2+) as a cofactor.

Its subcellular location is the cytoplasm. Its function is as follows. Probably phosphorylates lipids; the in vivo substrate is unknown. This chain is Probable lipid kinase YegS-like, found in Pseudomonas syringae pv. tomato (strain ATCC BAA-871 / DC3000).